The chain runs to 138 residues: Large ribosomal subunit protein uL16 (138 aa).

It belongs to the universal ribosomal protein uL16 family. Part of the 50S ribosomal subunit.

Binds 23S rRNA and is also seen to make contacts with the A and possibly P site tRNAs. This is Large ribosomal subunit protein uL16 from Ureaplasma parvum serovar 3 (strain ATCC 27815 / 27 / NCTC 11736).